A 366-amino-acid chain; its full sequence is UPF0329 protein ECU01_0130/ECU01_1480/ECU08_0060 (366 aa).

The segment at 325–366 (IRKEEKRIRKEEERAKNEEELLRMVESEEGKSGEGEEGCRRG) is disordered.

This sequence belongs to the UPF0329 family.

This is UPF0329 protein ECU01_0130/ECU01_1480/ECU08_0060 from Encephalitozoon cuniculi (strain GB-M1) (Microsporidian parasite).